The following is a 120-amino-acid chain: Aspartate 1-decarboxylase (120 aa).

Ser-25 serves as the catalytic Schiff-base intermediate with substrate; via pyruvic acid. Pyruvic acid (Ser) is present on Ser-25. Thr-57 is a binding site for substrate. Tyr-58 serves as the catalytic Proton donor. Substrate is bound at residue 73–75 (GAA).

Belongs to the PanD family. As to quaternary structure, heterooctamer of four alpha and four beta subunits. It depends on pyruvate as a cofactor. Post-translationally, is synthesized initially as an inactive proenzyme, which is activated by self-cleavage at a specific serine bond to produce a beta-subunit with a hydroxyl group at its C-terminus and an alpha-subunit with a pyruvoyl group at its N-terminus.

The protein resides in the cytoplasm. The enzyme catalyses L-aspartate + H(+) = beta-alanine + CO2. It functions in the pathway cofactor biosynthesis; (R)-pantothenate biosynthesis; beta-alanine from L-aspartate: step 1/1. Functionally, catalyzes the pyruvoyl-dependent decarboxylation of aspartate to produce beta-alanine. The polypeptide is Aspartate 1-decarboxylase (Thermus thermophilus (strain ATCC 27634 / DSM 579 / HB8)).